Here is a 128-residue protein sequence, read N- to C-terminus: Methylglyoxal synthase (128 aa).

Residues 1-128 (MRIALIAHDR…MQDHPGNRQA (128 aa)) enclose the MGS-like domain. Substrate-binding positions include His-8, Lys-12, 34-37 (TGTT), and 54-55 (SG). Asp-60 (proton donor/acceptor) is an active-site residue. His-87 provides a ligand contact to substrate.

It belongs to the methylglyoxal synthase family.

The catalysed reaction is dihydroxyacetone phosphate = methylglyoxal + phosphate. Functionally, catalyzes the formation of methylglyoxal from dihydroxyacetone phosphate. The chain is Methylglyoxal synthase from Moorella thermoacetica (strain ATCC 39073 / JCM 9320).